The following is a 38-amino-acid chain: Small ribosomal subunit protein uS12c (38 aa).

The disordered stretch occupies residues 1 to 26 (MPTIQQLIRNARQPIENRKKSPALRG).

This sequence belongs to the universal ribosomal protein uS12 family. In terms of assembly, part of the 30S ribosomal subunit.

The protein resides in the plastid. It localises to the chloroplast. With S4 and S5 plays an important role in translational accuracy. Located at the interface of the 30S and 50S subunits. This Pinus contorta (Shore pine) protein is Small ribosomal subunit protein uS12c (rps12).